Here is a 195-residue protein sequence, read N- to C-terminus: CASP-like protein Os03g0196400 (195 aa).

The Cytoplasmic portion of the chain corresponds to 1-38; that stretch reads MRQQQAGGVGDGVSPGNVPVCYYGPGGRVPSSLERRAR. A helical membrane pass occupies residues 39–59; the sequence is AAEVLLRCAACGLAVLAAALL. Residues 60 to 81 are Extracellular-facing; that stretch reads GADRQTRVFFSIQKVARYTDMQ. A helical transmembrane segment spans residues 82-102; sequence SLVLLVIANGMAACYSLIQCA. Over 103–104 the chain is Cytoplasmic; that stretch reads RC. Residues 105–125 traverse the membrane as a helical segment; that stretch reads LVMAYIVISAVAAAMEAALIG. At 126 to 150 the chain is on the extracellular side; that stretch reads KYGQPEFQWMKTCHLYKRFCAQAGG. Residues 151–171 form a helical membrane-spanning segment; that stretch reads GVACAIAASVNMVGVALISAF. Residues 172–195 are Cytoplasmic-facing; the sequence is NLFRLYGNSNGGGKATTTTMAGGK.

Belongs to the Casparian strip membrane proteins (CASP) family. Homodimer and heterodimers.

The protein resides in the cell membrane. This Oryza sativa subsp. japonica (Rice) protein is CASP-like protein Os03g0196400.